Reading from the N-terminus, the 103-residue chain is Small ribosomal subunit protein uS10 (103 aa).

It belongs to the universal ribosomal protein uS10 family. Part of the 30S ribosomal subunit.

Involved in the binding of tRNA to the ribosomes. The polypeptide is Small ribosomal subunit protein uS10 (Borrelia duttonii (strain Ly)).